The primary structure comprises 216 residues: SPbeta prophage-derived uncharacterized protein YomX (216 aa).

The sequence is that of SPbeta prophage-derived uncharacterized protein YomX (yomX) from Bacillus subtilis (strain 168).